We begin with the raw amino-acid sequence, 152 residues long: Transcriptional regulator MraZ (152 aa).

SpoVT-AbrB domains are found at residues 5 to 52 and 81 to 124; these read ATLV…PLPE and ASEC…DETT.

This sequence belongs to the MraZ family. Forms oligomers.

Its subcellular location is the cytoplasm. It localises to the nucleoid. In terms of biological role, negatively regulates its own expression and that of the subsequent genes in the proximal part of the division and cell wall (dcw) gene cluster. Acts by binding directly to DNA. May also regulate the expression of genes outside the dcw cluster. This chain is Transcriptional regulator MraZ, found in Citrobacter koseri (strain ATCC BAA-895 / CDC 4225-83 / SGSC4696).